A 291-amino-acid chain; its full sequence is Acetylglutamate kinase (291 aa).

Substrate contacts are provided by residues 64–65 (GG), R86, and N190.

It belongs to the acetylglutamate kinase family. ArgB subfamily.

It is found in the cytoplasm. The catalysed reaction is N-acetyl-L-glutamate + ATP = N-acetyl-L-glutamyl 5-phosphate + ADP. It participates in amino-acid biosynthesis; L-arginine biosynthesis; N(2)-acetyl-L-ornithine from L-glutamate: step 2/4. Functionally, catalyzes the ATP-dependent phosphorylation of N-acetyl-L-glutamate. The chain is Acetylglutamate kinase from Leptospira borgpetersenii serovar Hardjo-bovis (strain L550).